The primary structure comprises 261 residues: Undecaprenyl-diphosphatase (261 aa).

7 helical membrane-spanning segments follow: residues 38 to 58 (RSDFFNIVIQAGAILAITFVF), 75 to 95 (RDYVMKLATAFLITAVVGLAV), 106 to 126 (IQPIAWALIIGGIWILIAESV), 136 to 156 (VTWSVAIAVGLAQVVAGVFPG), 181 to 201 (FSFLVGIPTMFSASSYACFEL), 217 to 237 (VAFVAAMLTGFAVVKWLLGYI), and 241 to 261 (SFAPFAYYRIALGLVLLTWLT).

It belongs to the UppP family.

The protein localises to the cell inner membrane. It carries out the reaction di-trans,octa-cis-undecaprenyl diphosphate + H2O = di-trans,octa-cis-undecaprenyl phosphate + phosphate + H(+). Functionally, catalyzes the dephosphorylation of undecaprenyl diphosphate (UPP). Confers resistance to bacitracin. This is Undecaprenyl-diphosphatase from Xylella fastidiosa (strain 9a5c).